Here is a 338-residue protein sequence, read N- to C-terminus: Cytoskeleton protein RodZ (338 aa).

The Cytoplasmic portion of the chain corresponds to 1–111 (MNTEASQDQT…LGKKHKKRDG (111 aa)). In terms of domain architecture, HTH cro/C1-type spans 19–79 (LRQAREALGL…KLVHLPEDEL (61 aa)). Residues 30–49 (QQMVAERLCLKVSTIRDIEE) constitute a DNA-binding region (H-T-H motif). The chain crosses the membrane as a helical; Signal-anchor for type II membrane protein span at residues 112-132 (WLMSFTWLIVLVVLGLTGAWW). The Periplasmic segment spans residues 133 to 338 (WQNHQAQQAE…RVARLTVGVE (206 aa)). 2 stretches are compositionally biased toward polar residues: residues 151-163 (SAQLSQNGGQSVP) and 180-195 (PVANSQPSTPTENGTV). The interval 151 to 253 (SAQLSQNGGQ…LPTADAGVTG (103 aa)) is disordered. Low complexity predominate over residues 196-209 (PATSSAAPADTANN). The span at 210 to 241 (GVNTTAPQGTTSAESAVVSPSQAPLPSVSTAQ) shows a compositional bias: polar residues.

This sequence belongs to the RodZ family.

Its subcellular location is the cell inner membrane. Cytoskeletal protein that is involved in cell-shape control through regulation of the length of the long axis. In Yersinia enterocolitica serotype O:8 / biotype 1B (strain NCTC 13174 / 8081), this protein is Cytoskeleton protein RodZ.